Reading from the N-terminus, the 34-residue chain is Photosystem II reaction center protein M (34 aa).

A helical membrane pass occupies residues 7-27; sequence GFIATILFVLVPTVFLLILYI.

The protein belongs to the PsbM family. In terms of assembly, PSII is composed of 1 copy each of membrane proteins PsbA, PsbB, PsbC, PsbD, PsbE, PsbF, PsbH, PsbI, PsbJ, PsbK, PsbL, PsbM, PsbT, PsbX, PsbY, PsbZ, Psb30/Ycf12, peripheral proteins PsbO, CyanoQ (PsbQ), PsbU, PsbV and a large number of cofactors. It forms dimeric complexes.

The protein resides in the cellular thylakoid membrane. One of the components of the core complex of photosystem II (PSII). PSII is a light-driven water:plastoquinone oxidoreductase that uses light energy to abstract electrons from H(2)O, generating O(2) and a proton gradient subsequently used for ATP formation. It consists of a core antenna complex that captures photons, and an electron transfer chain that converts photonic excitation into a charge separation. This subunit is found at the monomer-monomer interface. This is Photosystem II reaction center protein M from Picosynechococcus sp. (strain ATCC 27264 / PCC 7002 / PR-6) (Agmenellum quadruplicatum).